We begin with the raw amino-acid sequence, 300 residues long: tRNA pseudouridine synthase B (300 aa).

Asp-47 acts as the Nucleophile in catalysis.

This sequence belongs to the pseudouridine synthase TruB family. Type 1 subfamily.

The enzyme catalyses uridine(55) in tRNA = pseudouridine(55) in tRNA. Responsible for synthesis of pseudouridine from uracil-55 in the psi GC loop of transfer RNAs. This is tRNA pseudouridine synthase B from Azoarcus sp. (strain BH72).